Reading from the N-terminus, the 576-residue chain is Arginine--tRNA ligase (576 aa).

The short motif at 132 to 142 (ANPTGPMHIGH) is the 'HIGH' region element.

Belongs to the class-I aminoacyl-tRNA synthetase family. Monomer.

It localises to the cytoplasm. It catalyses the reaction tRNA(Arg) + L-arginine + ATP = L-arginyl-tRNA(Arg) + AMP + diphosphate. The protein is Arginine--tRNA ligase of Ehrlichia ruminantium (strain Welgevonden).